Reading from the N-terminus, the 342-residue chain is Large ribosomal subunit protein uL10 (342 aa).

The interval 212-342 (EYIDMLQKAY…ALAGLSALFG (131 aa)) is required for interaction with ribosomal protein L12 dimers. Over residues 299 to 308 (QAQVAVATQP) the composition is skewed to polar residues. The segment at 299–342 (QAQVAVATQPSEEEKKEEEKTEEEEKEEEASEEEALAGLSALFG) is disordered. The span at 318 to 333 (KTEEEEKEEEASEEEA) shows a compositional bias: acidic residues.

Belongs to the universal ribosomal protein uL10 family. In terms of assembly, part of the 50S ribosomal subunit, binds large rRNA. Forms the ribosomal stalk which helps the ribosome interact with GTP-bound translation factors. Forms a heptameric L10(L12)2(L12)2(L12)2 complex, where L10 forms an elongated spine to which the L12 dimers bind in a sequential fashion.

Its function is as follows. Forms the large subunit's ribosomal stalk, playing a central role in the interaction of the ribosome with elongation factors; the stalk complex of P.horikoshii binds to E.coli large subunits and confers on them the ability to interact with eukaryotic elongation factors. Each succesive L12 dimer bound along the P0 spine increases the GTPase activity of elongation factors and increases translation by reconsituted ribosomes, although the first site is the most stimulatory. The chain is Large ribosomal subunit protein uL10 from Pyrococcus horikoshii (strain ATCC 700860 / DSM 12428 / JCM 9974 / NBRC 100139 / OT-3).